A 120-amino-acid polypeptide reads, in one-letter code: Ribosome-binding factor A (120 aa).

Belongs to the RbfA family. In terms of assembly, monomer. Binds 30S ribosomal subunits, but not 50S ribosomal subunits or 70S ribosomes.

It localises to the cytoplasm. Functionally, one of several proteins that assist in the late maturation steps of the functional core of the 30S ribosomal subunit. Associates with free 30S ribosomal subunits (but not with 30S subunits that are part of 70S ribosomes or polysomes). Required for efficient processing of 16S rRNA. May interact with the 5'-terminal helix region of 16S rRNA. The sequence is that of Ribosome-binding factor A from Rickettsia peacockii (strain Rustic).